The sequence spans 76 residues: Kappa-actitoxin-Avd4m (76 aa).

A signal peptide spans M1–A19. Positions A20 to F31 are excised as a propeptide. 3 disulfides stabilise this stretch: C37/C72, C39/C65, and C55/C73.

Belongs to the sea anemone type 3 (BDS) potassium channel toxin family. In terms of tissue distribution, weakly expressed in the ectodermal tissue from the distal and proximal tentacles, body wall, and oral disk.

It is found in the secreted. The protein localises to the nematocyst. Its function is as follows. Blocks Kv3 voltage-gated potassium channels. Reduces blood pressure. The chain is Kappa-actitoxin-Avd4m from Anemonia viridis (Snakelocks anemone).